A 97-amino-acid polypeptide reads, in one-letter code: Acylphosphatase (97 aa).

The 87-residue stretch at 9 to 95 (TRHLRIHGLV…CDAQGFEQRE (87 aa)) folds into the Acylphosphatase-like domain. Residues Arg-24 and Asn-42 contribute to the active site.

The protein belongs to the acylphosphatase family.

The enzyme catalyses an acyl phosphate + H2O = a carboxylate + phosphate + H(+). The protein is Acylphosphatase (acyP) of Acidovorax sp. (strain JS42).